The primary structure comprises 69 residues: Pancreatic secretory trypsin inhibitor (69 aa).

A Kazal-like domain is found at 8 to 65 (TGTEAACSNYDLKKGCAKIFDPVCGTDNILYSNECLLCFQNLQRKTNVRIKRRGTCQE). Cystine bridges form between Cys14–Cys45, Cys23–Cys42, and Cys31–Cys63.

Its subcellular location is the secreted. Functionally, this is a trypsin inhibitor, its physiological function is to prevent the trypsin-catalyzed premature activation of zymogens within the pancreas. This Struthio camelus (Common ostrich) protein is Pancreatic secretory trypsin inhibitor (SPINK1).